Reading from the N-terminus, the 347-residue chain is 4-hydroxy-2-oxovalerate aldolase (347 aa).

The 252-residue stretch at 11–262 (PVVVDTTLRD…NPGLDVFKLL (252 aa)) folds into the Pyruvate carboxyltransferase domain. Residue 19 to 20 (RD) coordinates substrate. Asp20 is a binding site for Mn(2+). His23 (proton acceptor) is an active-site residue. Positions 173 and 201 each coordinate substrate. Mn(2+) contacts are provided by His201 and His203. A substrate-binding site is contributed by Tyr292.

Belongs to the 4-hydroxy-2-oxovalerate aldolase family. In terms of assembly, homodimer. Can also form a heterotetramer composed of two aldolase (TTHB246) and two dehydrogenase (TTHB247) subunits. Upon complex formation, the aldolase shows a 5-fold increase in substrate affinity, while the dehydrogenase shows a 3-fold decrease; the kcat values of each enzyme are reduced by 2-fold when they are in a complex. It depends on Co(2+) as a cofactor. Ni(2+) is required as a cofactor. The cofactor is Mn(2+).

The enzyme catalyses (S)-4-hydroxy-2-oxopentanoate = acetaldehyde + pyruvate. It catalyses the reaction (S)-4-hydroxy-2-oxohexanoate = propanal + pyruvate. Its activity is regulated as follows. Appears to be allosterically activated by NADH. Functionally, catalyzes the retro-aldol cleavage of both 4-hydroxy-2-oxopentanoate (HOPA) and 4-hydroxy-2-oxohexanoate (HOHA) to pyruvate and acetaldehyde or propanaldehyde, respectively. The aldehydes produced by this reaction are directly channeled to the dehydrogenase TTHB247, ensuring that these toxic aldehydes are sequestered from cellular components. Is involved in the meta-cleavage pathway for the degradation of aromatic compounds. Appears to be stereospecific since it can cleave (4S)-4-hydroxy-2-oxopentanoate but not the (4R) isomer. Is not able to catalyze the aldol addition of 2-oxobutyrate with acetaldehyde; this indicates that the enzyme is specific for pyruvate as the carbonyl donor. This is 4-hydroxy-2-oxovalerate aldolase from Thermus thermophilus (strain ATCC 27634 / DSM 579 / HB8).